A 302-amino-acid chain; its full sequence is 4-diphosphocytidyl-2-C-methyl-D-erythritol kinase (302 aa).

The active site involves lysine 27. ATP is bound at residue 110 to 120 (PMGGGVGGGSS). Aspartate 152 is a catalytic residue.

It belongs to the GHMP kinase family. IspE subfamily.

The catalysed reaction is 4-CDP-2-C-methyl-D-erythritol + ATP = 4-CDP-2-C-methyl-D-erythritol 2-phosphate + ADP + H(+). It participates in isoprenoid biosynthesis; isopentenyl diphosphate biosynthesis via DXP pathway; isopentenyl diphosphate from 1-deoxy-D-xylulose 5-phosphate: step 3/6. Catalyzes the phosphorylation of the position 2 hydroxy group of 4-diphosphocytidyl-2C-methyl-D-erythritol. This is 4-diphosphocytidyl-2-C-methyl-D-erythritol kinase from Mannheimia succiniciproducens (strain KCTC 0769BP / MBEL55E).